A 397-amino-acid chain; its full sequence is MTTSIYLVKGREKSLRRRHPWVFSRGIDRIEGNKPSMGETVEVYDNKGEWLARGAYSPQSQIRIRVWTFDKKEVINVDFFVKRLKAAQALRDVLAARDGLTGYRLIAAESDGLPGITIDRYQNFLVCQLLSAGAEEQKDALVEALNICYPECSVYERSDVAVRKKEGLKQRTGVLSGEEPPKFVTIEENGIKINVDIVGGHKTGFYLDQRDSRQAAVKYVNGKRVLNCFCYTGGFGLYALKGGASQVVNVDVSQPALDTARLNTEANGLPVENAEFVNADVFKLLREYRERGEFFDVVIMDPPKFAESKSQLVGACRGYKDINMLAMQILNPGGILLTYSCSGLMDNGLFQKIVADAALDAHREVQFIERFGQAADHPLDSAYPEGFYLKGFACYVK.

Residues 2–82 (TTSIYLVKGR…EVINVDFFVK (81 aa)) form the PUA domain.

It belongs to the methyltransferase superfamily. RlmI family.

It localises to the cytoplasm. It catalyses the reaction cytidine(1962) in 23S rRNA + S-adenosyl-L-methionine = 5-methylcytidine(1962) in 23S rRNA + S-adenosyl-L-homocysteine + H(+). Functionally, specifically methylates the cytosine at position 1962 (m5C1962) of 23S rRNA. This chain is Ribosomal RNA large subunit methyltransferase I, found in Photobacterium profundum (strain SS9).